The primary structure comprises 838 residues: DNA gyrase subunit A (838 aa).

Threonine 2 carries the N-acetylthreonine modification. Positions 41-510 (LPEVRDGLKP…ADGDVSDEDL (470 aa)) constitute a Topo IIA-type catalytic domain. Tyrosine 129 functions as the O-(5'-phospho-DNA)-tyrosine intermediate in the catalytic mechanism. Residues aspartate 504, serine 506, glutamate 508, and aspartate 515 each coordinate Ca(2+). An EF-hand domain is found at 504–516 (DVSDEDLIAREDV). The segment at 514 to 838 (EDVVVTITET…DANGADQTGN (325 aa)) is C-terminal domain CTD. The short motif at 537–543 (QKRGGKG) is the GyrA-box element. The GyrA-box-1 motif lies at 743-749 (QGRGGKG).

This sequence belongs to the type II topoisomerase GyrA/ParC subunit family. In terms of assembly, heterotetramer, composed of two GyrA and two GyrB chains. In the heterotetramer, GyrA contains the active site tyrosine that forms a transient covalent intermediate with DNA, while GyrB binds cofactors and catalyzes ATP hydrolysis. Ca(2+) serves as cofactor.

The protein resides in the cytoplasm. It catalyses the reaction ATP-dependent breakage, passage and rejoining of double-stranded DNA.. DNA supercoiling inhibited by (fluoro)quinoline antibiotics such as sparfloxacin and levofloxacin, which usually act on GyrA. DNA supercoiling inhibited by the coumarin antibiotic novobiocin which acts on GyrB. Quinolones lead to gyrase-mediated dsDNA cleavage while preventing reclosure. DNA supercoiling activity inhibited by aminopyrazinamide and pyrrolamide derivatives, probably via effects on the GyrB subunit. DNA relaxation inhibited by ATP and its analogs. DNA supercoiling, relaxation, decatenation and quinolone-promoted DNA cleavage are inhibited by MfpA (50% inhibition occurs at 2 uM), inhibition of gyrase activities is enhanced in a concentration-dependent manner by MfpA. In terms of biological role, a type II topoisomerase that negatively supercoils closed circular double-stranded (ds) DNA in an ATP-dependent manner to maintain chromosomes in an underwound state, while in the absence of ATP it relaxes supercoiled dsDNA. Also catalyzes the interconversion of other topological isomers of dsDNA rings, including catenanes. Gyrase from M.tuberculosis has higher decatenation than supercoiling activity compared to E.coli; as M.tuberculosis only has 1 type II topoisomerase, gyrase has to fulfill the decatenation function of topoisomerase IV as well. At comparable concentrations M.tuberculosis gyrase cannot introduce as many negative supercoils into DNA as the E.coli enzyme, and its ATPase activity is lower, perhaps because it does not couple DNA wrapping and ATP binding as well as E.coli. Its function is as follows. Negative supercoiling favors strand separation, and DNA replication, transcription, recombination and repair, all of which involve strand separation. Type II topoisomerases break and join 2 DNA strands simultaneously in an ATP-dependent manner. The polypeptide is DNA gyrase subunit A (Mycobacterium tuberculosis (strain ATCC 25618 / H37Rv)).